Here is a 512-residue protein sequence, read N- to C-terminus: Metal transporter Nramp4 (512 aa).

The next 12 membrane-spanning stretches (helical) occupy residues 52 to 72 (LWLF…PGNL), 80 to 100 (AIAG…GLLI), 129 to 149 (MVLW…EVIG), 161 to 181 (LVPL…FLFL), 189 to 209 (LEAV…WMFG), 235 to 255 (AVGI…SALV), 277 to 297 (IEST…TTVF), 323 to 343 (YGGG…AAGQ), 371 to 391 (ALIT…VFDS), 402 to 422 (WLNV…LCLV), 440 to 460 (ISWI…VDFF), and 468 to 488 (ILLV…LYLI).

This sequence belongs to the NRAMP (TC 2.A.55) family. Expressed in vascular tissues.

It localises to the vacuole membrane. In terms of biological role, vacuolar metal transporter involved in intracellular metal homeostasis. Can transport iron (Fe), manganese (Mn) and cadmium (Cd). Regulates metal accumulation under Fe starvation. Acts redundantly with NRAMP3 to mobilize vacuolar Fe and provide sufficient Fe during seed germination. In association with NRAMP3, required for optimal growth and photosynthesis under Mn deficiency. Exports Mn from vacuoles in leaf mesophyll cells, making Mn available for functional photosystem II in chloroplasts. The protein is Metal transporter Nramp4 (NRAMP4) of Arabidopsis thaliana (Mouse-ear cress).